We begin with the raw amino-acid sequence, 401 residues long: Imidazolonepropionase (401 aa).

Positions 66 and 68 each coordinate Fe(3+). 2 residues coordinate Zn(2+): His66 and His68. Positions 75, 138, and 171 each coordinate 4-imidazolone-5-propanoate. Tyr138 provides a ligand contact to N-formimidoyl-L-glutamate. His236 serves as a coordination point for Fe(3+). Residue His236 participates in Zn(2+) binding. Gln239 contributes to the 4-imidazolone-5-propanoate binding site. Asp311 lines the Fe(3+) pocket. Zn(2+) is bound at residue Asp311. Residues Asn313 and Gly315 each contribute to the N-formimidoyl-L-glutamate site. Thr316 is a 4-imidazolone-5-propanoate binding site.

Belongs to the metallo-dependent hydrolases superfamily. HutI family. Zn(2+) is required as a cofactor. The cofactor is Fe(3+).

It localises to the cytoplasm. It carries out the reaction 4-imidazolone-5-propanoate + H2O = N-formimidoyl-L-glutamate. It participates in amino-acid degradation; L-histidine degradation into L-glutamate; N-formimidoyl-L-glutamate from L-histidine: step 3/3. In terms of biological role, catalyzes the hydrolytic cleavage of the carbon-nitrogen bond in imidazolone-5-propanoate to yield N-formimidoyl-L-glutamate. It is the third step in the universal histidine degradation pathway. The chain is Imidazolonepropionase from Pseudomonas putida (strain GB-1).